A 152-amino-acid chain; its full sequence is Transcriptional repressor NrdR (152 aa).

A zinc finger lies at 3 to 34 (CPYCNASETKVIDSRLAAEGAQVRRRRSCNSC). The ATP-cone domain maps to 49–139 (PRIIKSSGKI…VYRDFQDIDA (91 aa)).

The protein belongs to the NrdR family. Zn(2+) serves as cofactor.

Its function is as follows. Negatively regulates transcription of bacterial ribonucleotide reductase nrd genes and operons by binding to NrdR-boxes. The protein is Transcriptional repressor NrdR of Psychrobacter cryohalolentis (strain ATCC BAA-1226 / DSM 17306 / VKM B-2378 / K5).